The primary structure comprises 300 residues: Endonuclease III-like protein 1 (300 aa).

The N-terminal 19 residues, 1 to 19 (MNSGVRMVTRSRSRATRIA), are a transit peptide targeting the mitochondrion. The disordered stretch occupies residues 1 to 53 (MNSGVRMVTRSRSRATRIASEGCREELAPREAAAEGRKSHRPVRHPRRTQKTH). Residues 22–37 (GCREELAPREAAAEGR) show a composition bias toward basic and acidic residues. Over residues 38-51 (KSHRPVRHPRRTQK) the composition is skewed to basic residues. Positions 187 to 211 (RYEGDIPASVAELVALPGVGPKMAH) constitute a HhH domain. Lys208 acts as the Nucleophile; for N-glycosylase activity in catalysis. 4 residues coordinate [4Fe-4S] cluster: Cys278, Cys285, Cys288, and Cys294.

The protein belongs to the Nth/MutY family. Interacts with YBX1. Interacts with ERCC5/XPG; the interaction stimulates NTHL1 activity and NTHL1 binding to its DNA substrate. Requires [4Fe-4S] cluster as cofactor. Post-translationally, ubiquitinated by TRIM26; leading to proteasomal degradation. In terms of tissue distribution, widely expressed.

Its subcellular location is the nucleus. The protein localises to the mitochondrion. The catalysed reaction is 2'-deoxyribonucleotide-(2'-deoxyribose 5'-phosphate)-2'-deoxyribonucleotide-DNA = a 3'-end 2'-deoxyribonucleotide-(2,3-dehydro-2,3-deoxyribose 5'-phosphate)-DNA + a 5'-end 5'-phospho-2'-deoxyribonucleoside-DNA + H(+). Its function is as follows. Bifunctional DNA N-glycosylase with associated apurinic/apyrimidinic (AP) lyase function that catalyzes the first step in base excision repair (BER), the primary repair pathway for the repair of oxidative DNA damage. The DNA N-glycosylase activity releases the damaged DNA base from DNA by cleaving the N-glycosidic bond, leaving an AP site. The AP lyase activity cleaves the phosphodiester bond 3' to the AP site by a beta-elimination. Primarily recognizes and repairs oxidative base damage of pyrimidines. This chain is Endonuclease III-like protein 1 (Nthl1), found in Mus musculus (Mouse).